The chain runs to 267 residues: 4-hydroxy-tetrahydrodipicolinate reductase (267 aa).

NAD(+) contacts are provided by residues 8-13 (GAAGRM) and Asp-34. Arg-35 contributes to the NADP(+) binding site. NAD(+)-binding positions include 98 to 100 (GTT) and 122 to 125 (AANF). Residue His-155 is the Proton donor/acceptor of the active site. His-156 provides a ligand contact to (S)-2,3,4,5-tetrahydrodipicolinate. The active-site Proton donor is Lys-159. Residue 165 to 166 (GT) participates in (S)-2,3,4,5-tetrahydrodipicolinate binding.

Belongs to the DapB family.

The protein localises to the cytoplasm. The catalysed reaction is (S)-2,3,4,5-tetrahydrodipicolinate + NAD(+) + H2O = (2S,4S)-4-hydroxy-2,3,4,5-tetrahydrodipicolinate + NADH + H(+). It carries out the reaction (S)-2,3,4,5-tetrahydrodipicolinate + NADP(+) + H2O = (2S,4S)-4-hydroxy-2,3,4,5-tetrahydrodipicolinate + NADPH + H(+). It functions in the pathway amino-acid biosynthesis; L-lysine biosynthesis via DAP pathway; (S)-tetrahydrodipicolinate from L-aspartate: step 4/4. Its function is as follows. Catalyzes the conversion of 4-hydroxy-tetrahydrodipicolinate (HTPA) to tetrahydrodipicolinate. In Pseudomonas amygdali pv. tabaci (Pseudomonas syringae pv. tabaci), this protein is 4-hydroxy-tetrahydrodipicolinate reductase.